We begin with the raw amino-acid sequence, 549 residues long: MEFAELIKTPRVDNVVLHRPFYPAVEGTLCLTGHHLILSSRQDNTEELWLLHSNIDAIDKRFVGSLGTIIIKCKDFRIIQLDIPGMEECLNIASSIEALSTLDSITLMYPFFYRPMFEVIEDGWHSFLPEQEFELYSSATSEWRLSYVNKEFAVCPSYPPIVTVPKSIDDEALRKVATFRHGGRFPVLSYYHKKNGMVIMRSGQPLTGTNGRRCKEDEKLINATLRAGKRGYIIDTRSLNVAQQTRAKGGGFEQEAHYPQWRRIHKSIERYHILQESLIKLVEACNDQTHNMDRWLSKLEASNWLTHIKEILTTACLAAQCIDREGASILIHGTEGTDSTLQVTSLAQIILEPRSRTIRGFEALIEREWLQAGHPFQQRCAQSAYCNTKQKWEAPVFLLFLDCVWQILRQFPCSFEFNENFLIMLFEHAYASQFGTFLGNNESERCKLKLQQKTMSLWSWVNQPSELSKFTNPLFEANNLVIWPSVAPQSLPLWEGIFLRWNRSSKYLDEAYEEMVNIIEYNKELQAKVNILRRQLAELETEDGMQESP.

N-acetylmethionine is present on M1. In terms of domain architecture, GRAM spans 4 to 99 (AELIKTPRVD…LNIASSIEAL (96 aa)). Positions 123-498 (GWHSFLPEQE…QSLPLWEGIF (376 aa)) constitute a Myotubularin phosphatase domain. Positions 508–542 (LDEAYEEMVNIIEYNKELQAKVNILRRQLAELETE) form a coiled coil. S548 carries the phosphoserine modification.

The protein belongs to the protein-tyrosine phosphatase family. Non-receptor class myotubularin subfamily. As to quaternary structure, homodimer. Heterodimer (via C-terminus) with lipid phosphatase MTMR6 (via C-terminus). Heterodimer (via coiled coil domain) with lipid phosphatase MTMR7 (via C-terminus). Heterodimer with lipid phosphatase MTMR8. Expressed in many tissues.

The protein localises to the cytoplasm. It localises to the cell projection. Its subcellular location is the ruffle membrane. It is found in the perinuclear region. The protein resides in the endoplasmic reticulum. Its function is as follows. Acts as an adapter for myotubularin-related phosphatases. Increases lipid phosphatase MTMR6 catalytic activity, specifically towards phosphatidylinositol 3,5-bisphosphate and MTMR6 binding affinity for phosphorylated phosphatidylinositols. Positively regulates lipid phosphatase MTMR7 catalytic activity. Increases MTMR8 catalytic activity towards phosphatidylinositol 3-phosphate. The formation of the MTMR6-MTMR9 complex, stabilizes both MTMR6 and MTMR9 protein levels. Stabilizes MTMR8 protein levels. Plays a role in the late stages of macropinocytosis possibly by regulating MTMR6-mediated dephosphorylation of phosphatidylinositol 3-phosphate in membrane ruffles. Negatively regulates autophagy, in part via its association with MTMR8. Negatively regulates DNA damage-induced apoptosis, in part via its association with MTMR6. Does not bind mono-, di- and tri-phosphorylated phosphatidylinositols, phosphatidic acid and phosphatidylserine. The polypeptide is Myotubularin-related protein 9 (MTMR9) (Homo sapiens (Human)).